Consider the following 406-residue polypeptide: UPF0754 membrane protein Cyan7425_4067 (406 aa).

The helical transmembrane segment at 381 to 401 (IVTLGGVLGLLIGIAQSVLLL) threads the bilayer.

It belongs to the UPF0754 family.

It localises to the cell inner membrane. The sequence is that of UPF0754 membrane protein Cyan7425_4067 from Cyanothece sp. (strain PCC 7425 / ATCC 29141).